A 497-amino-acid chain; its full sequence is Mechanosensitive ion channel protein 1, mitochondrial (497 aa).

Residues 1–86 (MAGVRLSLLK…RAFSSKSDDF (86 aa)) constitute a mitochondrion transit peptide. 5 helical membrane passes run 152-172 (DVIV…VVMP), 216-236 (LVTF…TIAA), 238-258 (YFSP…LYRW), 280-300 (VLTL…MASA), and 305-325 (VAVQ…AFAA).

It belongs to the MscS (TC 1.A.23) family.

The protein resides in the mitochondrion membrane. Mechanosensitive channel that opens in response to stretch forces in the membrane lipid bilayer. The chain is Mechanosensitive ion channel protein 1, mitochondrial (MSL1) from Arabidopsis thaliana (Mouse-ear cress).